The primary structure comprises 367 residues: Alpha-2-HS-glycoprotein (367 aa).

The signal sequence occupies residues 1-18; it reads MKSLVLLLCLAQLWGCHS. The Cystatin fetuin-A-type 1 domain occupies 27–133; that stretch reads YRQPNCDDPE…KFSVVYAKCD (107 aa). 6 cysteine pairs are disulfide-bonded: Cys32-Cys358, Cys89-Cys100, Cys114-Cys132, Cys146-Cys149, Cys208-Cys219, and Cys230-Cys247. Ser134, Ser135, and Ser138 each carry phosphoserine. Positions 144–255 constitute a Cystatin fetuin-A-type 2 domain; sequence KVCQDCPLLA…TCTVFQTQPV (112 aa). N-linked (GlcNAc...) asparagine glycans are attached at residues Asn156 and Asn176. Residues 254-301 are disordered; sequence PVTSQPQPEGANETVPTPVVDPDAPPSPPLGAPGLPPAGSPPDSHVLL. Asn265 carries N-linked (GlcNAc...) asparagine glycosylation. Pro residues predominate over residues 276-293; the sequence is DAPPSPPLGAPGLPPAGS. Positions 301–340 are cleaved as a propeptide — connecting peptide; that stretch reads LAAPPGHQLHWAHYDLRHTFMGVVSLGSPSGEASHPRKTR. Phosphothreonine is present on Thr319. A phosphoserine mark is found at Ser325, Ser328, and Ser330. An O-linked (GalNAc...) threonine glycan is attached at Thr339.

It belongs to the fetuin family. As to quaternary structure, alpha-2-HS glycoprotein derives from this precursor, when the connecting peptide is cleaved off. The two chains A and B are held together by a single disulfide bond. Post-translationally, phosphorylated by FAM20C in the extracellular medium.

It localises to the secreted. Functionally, promotes endocytosis, possesses opsonic properties and influences the mineral phase of bone. Shows affinity for calcium and barium ions. The protein is Alpha-2-HS-glycoprotein (AHSG) of Pan troglodytes (Chimpanzee).